The primary structure comprises 270 residues: A-type potassium channel modulatory protein KCNIP2 (270 aa).

Basic and acidic residues predominate over residues 1–17; that stretch reads MRGQGRKESLSDSRDLD. The disordered stretch occupies residues 1–33; it reads MRGQGRKESLSDSRDLDGSYDQLTGHPPGPTKK. A Phosphoserine modification is found at Ser-9. S-palmitoyl cysteine attachment occurs at residues Cys-45 and Cys-46. The region spanning 81–137 is the EF-hand 1; degenerate domain; it reads FELSTVCHRPEGLEQLQEQTKFTRKELQVLYRGFKNECPSGIVNEENFKQIYSQFFP. EF-hand domains are found at residues 140-175, 176-211, and 224-259; these read DSST…ILRG, TIDD…IYDM, and APRE…DENI. Positions 153, 155, 157, 159, 164, 189, 191, 193, 195, 200, 237, 239, 241, and 248 each coordinate Ca(2+). Positions 257–270 are interaction with KCND2; sequence ENIMRSMQLFDNVI.

The protein belongs to the recoverin family. Component of heteromultimeric potassium channels. Identified in potassium channel complexes containing KCND1, KCND2, KCND3, KCNIP1, KCNIP2, KCNIP3, KCNIP4, DPP6 and DPP10. The KCND2-KCNIP2 channel complex contains four KCND2 and four KCNIP2 subunits. Interacts with KCND2. Probably part of a complex consisting of KCNIP1, KCNIP2 isoform 3 and KCND2. At least isoform 2 and isoform 3 can self-associate to form homodimers and homotetramers. Isoform 3 interacts with KCNIP1 in a calcium-dependent manner. Interacts with KCND3; each KCNIP2 monomer interacts with two adjacent KCND3 subunits, through both the N-terminal inactivation ball of a KCND3 subunit and a C-terminal helix from the adjacent KCND3 subunit, clamping them together; this interaction modulates the channel gating kinetics. In terms of processing, palmitoylated. Palmitoylation enhances association with the plasma membrane. Expressed in heart ventricle with isoform 1 as most prominent form.

Its subcellular location is the cell membrane. Functionally, regulatory subunit of Kv4/D (Shal)-type voltage-gated rapidly inactivating A-type potassium channels. Modulates channel density, inactivation kinetics and rate of recovery from inactivation in a calcium-dependent and isoform-specific manner. Involved in KCND2 and KCND3 trafficking to the cell surface. May be required for the expression of I(To) currents in the heart. The protein is A-type potassium channel modulatory protein KCNIP2 of Mustela putorius furo (European domestic ferret).